Consider the following 125-residue polypeptide: Fluoride-specific ion channel FluC (125 aa).

Helical transmembrane passes span 1–21 (MIQA…RYFV), 32–52 (AFPW…GVFA), 68–88 (LLIT…LDAI), and 101–121 (IYIA…LAIM). Residues Gly75 and Thr78 each coordinate Na(+).

The protein belongs to the fluoride channel Fluc/FEX (TC 1.A.43) family.

Its subcellular location is the cell inner membrane. The enzyme catalyses fluoride(in) = fluoride(out). Its activity is regulated as follows. Na(+) is not transported, but it plays an essential structural role and its presence is essential for fluoride channel function. Functionally, fluoride-specific ion channel. Important for reducing fluoride concentration in the cell, thus reducing its toxicity. The chain is Fluoride-specific ion channel FluC from Rhizobium etli (strain ATCC 51251 / DSM 11541 / JCM 21823 / NBRC 15573 / CFN 42).